Consider the following 512-residue polypeptide: ATP synthase subunit alpha (512 aa).

169-176 (GDRQTGKT) contributes to the ATP binding site.

It belongs to the ATPase alpha/beta chains family. In terms of assembly, F-type ATPases have 2 components, CF(1) - the catalytic core - and CF(0) - the membrane proton channel. CF(1) has five subunits: alpha(3), beta(3), gamma(1), delta(1), epsilon(1). CF(0) has four main subunits: a(1), b(1), b'(1) and c(9-12).

The protein localises to the cell inner membrane. The enzyme catalyses ATP + H2O + 4 H(+)(in) = ADP + phosphate + 5 H(+)(out). Its function is as follows. Produces ATP from ADP in the presence of a proton gradient across the membrane. The alpha chain is a regulatory subunit. This Roseobacter denitrificans (strain ATCC 33942 / OCh 114) (Erythrobacter sp. (strain OCh 114)) protein is ATP synthase subunit alpha.